Consider the following 434-residue polypeptide: Serine protease HTRA2, mitochondrial (434 aa).

Residues 34–65 (YSNNTANITTDSSSSSNNNSNRNNKNDNNNED) form a disordered region. Low complexity predominate over residues 35 to 60 (SNNTANITTDSSSSSNNNSNRNNKND). Residues 74-92 (LVRFFVPFSLGAVASSLVM) form a helical membrane-spanning segment. Positions 85-88 (AVAS) match the IAP-binding motif. A serine protease region spans residues 151-314 (SNGSGFVIEQ…IPIDYVKVFL (164 aa)). Residues His-169, Asp-201, and Ser-278 each act as charge relay system in the active site. Residues 337–424 (MGITMLTLTP…NMIIMRGVKQ (88 aa)) form the PDZ domain.

It belongs to the peptidase S1C family. Interacts with th/DIAP1 (via BIR 2 domain).

The protein resides in the mitochondrion intermembrane space. It is found in the mitochondrion membrane. The catalysed reaction is Cleavage of non-polar aliphatic amino-acids at the P1 position, with a preference for Val, Ile and Met. At the P2 and P3 positions, Arg is selected most strongly with a secondary preference for other hydrophilic residues.. Its function is as follows. Serine protease that shows proteolytic activity against a non-specific substrate beta-casein. Promotes or induces cell death either by direct binding to and inhibition of BIRC proteins (also called inhibitor of apoptosis proteins, IAPs), leading to an increase in caspase activity, or by a BIRC inhibition-independent, caspase-independent and serine protease activity-dependent mechanism. Can antagonize antiapoptotic activity of th/Diap1 by directly inducing the degradation of th/Diap1. The protein is Serine protease HTRA2, mitochondrial of Drosophila willistoni (Fruit fly).